The chain runs to 196 residues: Pyridoxal 5'-phosphate synthase subunit PdxT (196 aa).

Gly-46–Ser-48 provides a ligand contact to L-glutamine. Residue Cys-78 is the Nucleophile of the active site. L-glutamine contacts are provided by residues Arg-110 and Ile-138–Arg-139. Catalysis depends on charge relay system residues His-174 and Glu-176.

The protein belongs to the glutaminase PdxT/SNO family. As to quaternary structure, in the presence of PdxS, forms a dodecamer of heterodimers. Only shows activity in the heterodimer.

It catalyses the reaction aldehydo-D-ribose 5-phosphate + D-glyceraldehyde 3-phosphate + L-glutamine = pyridoxal 5'-phosphate + L-glutamate + phosphate + 3 H2O + H(+). The enzyme catalyses L-glutamine + H2O = L-glutamate + NH4(+). The protein operates within cofactor biosynthesis; pyridoxal 5'-phosphate biosynthesis. Functionally, catalyzes the hydrolysis of glutamine to glutamate and ammonia as part of the biosynthesis of pyridoxal 5'-phosphate. The resulting ammonia molecule is channeled to the active site of PdxS. The chain is Pyridoxal 5'-phosphate synthase subunit PdxT from Deinococcus radiodurans (strain ATCC 13939 / DSM 20539 / JCM 16871 / CCUG 27074 / LMG 4051 / NBRC 15346 / NCIMB 9279 / VKM B-1422 / R1).